Consider the following 329-residue polypeptide: uncharacterized protein (329 aa).

In terms of domain architecture, SIS spans 38–184; sequence IVKLILKSQE…MACLMRAKNF (147 aa). 56 to 61 provides a ligand contact to ATP; that stretch reads GVGKSA. CBS domains are found at residues 211 to 267 and 276 to 329; these read QTTN…GLSL and TLKP…GLKA.

The protein belongs to the SIS family. GutQ/KpsF subfamily.

This is an uncharacterized protein from Helicobacter pylori (strain J99 / ATCC 700824) (Campylobacter pylori J99).